A 420-amino-acid polypeptide reads, in one-letter code: MKLSEPLLVSLAAFSQAVTALVAFPGAEGFGANAIGGRNGQVYVVTNLNDSGTGSLRDAVSATDRIVVFAVGGVIKISDRIVVSKRVTILGQTAPGDGITVYGNGWSFSNADDAIVRYIRIRMGKGGSSGKDALGIAEGNRMIFDHVSVSWGRDETFSINGDASNITVQNSIIAQGLETHSCGGLMQTDGGVSLFRNLYIDNKTRNPKVKGVNEFTNNVVYNWGGGGGYIAGDSAGQSYANIIGNYFISGPSTSVTAFTRGNANFHGYVQNNYYDPDKDGQLDGFELGVSSSNYGGMAIMSSKYNYPAVAYTMSPAEAVTYVTKYAGASKVRDSVDTQLIAQVQSWGTEGGLISDEATMGGPGTLNGGTPAKDTDGDGIPDEAEKQLGTDPNTNDSMKLHSSGYTYLEVWANSLVPSTYH.

Residues 1–20 form the signal peptide; the sequence is MKLSEPLLVSLAAFSQAVTA. Residues Asn-49, Asn-165, and Asn-202 are each glycosylated (N-linked (GlcNAc...) asparagine). Residue Arg-205 is part of the active site. One can recognise an EF-hand domain in the interval 262 to 297; the sequence is NANFHGYVQNNYYDPDKDGQLDGFELGVSSSNYGGM. Residues Asp-275, Asp-277, Asp-279, Gln-281, and Glu-286 each contribute to the Ca(2+) site. The segment at 358–396 is disordered; that stretch reads TMGGPGTLNGGTPAKDTDGDGIPDEAEKQLGTDPNTNDS. N-linked (GlcNAc...) asparagine glycosylation occurs at Asn-394.

It belongs to the polysaccharide lyase 1 family. Requires Ca(2+) as cofactor.

Its subcellular location is the secreted. The catalysed reaction is Eliminative cleavage of (1-&gt;4)-alpha-D-galacturonan to give oligosaccharides with 4-deoxy-alpha-D-galact-4-enuronosyl groups at their non-reducing ends.. Pectinolytic enzyme consist of four classes of enzymes: pectin lyase, polygalacturonase, pectin methylesterase and rhamnogalacturonase. Among pectinolytic enzymes, pectin lyase is the most important in depolymerization of pectin, since it cleaves internal glycosidic bonds of highly methylated pectins. Favors pectate, the anion, over pectin, the methyl ester. In Aspergillus fumigatus (strain ATCC MYA-4609 / CBS 101355 / FGSC A1100 / Af293) (Neosartorya fumigata), this protein is Probable pectate lyase C (plyC).